Reading from the N-terminus, the 331-residue chain is Ketol-acid reductoisomerase (NADP(+)) (331 aa).

The KARI N-terminal Rossmann domain occupies 1-181; the sequence is MKMYYDADAD…GGTRAGVIET (181 aa). NADP(+) contacts are provided by residues 24–27, arginine 47, serine 50, and 82–85; these read YGSQ and DEKQ. Histidine 107 is an active-site residue. An NADP(+)-binding site is contributed by glycine 133. The KARI C-terminal knotted domain occupies 182-327; sequence TFREETETDL…KKLRAMMPWL (146 aa). Positions 190, 194, 226, and 230 each coordinate Mg(2+). Serine 251 is a substrate binding site.

The protein belongs to the ketol-acid reductoisomerase family. It depends on Mg(2+) as a cofactor.

The enzyme catalyses (2R)-2,3-dihydroxy-3-methylbutanoate + NADP(+) = (2S)-2-acetolactate + NADPH + H(+). It carries out the reaction (2R,3R)-2,3-dihydroxy-3-methylpentanoate + NADP(+) = (S)-2-ethyl-2-hydroxy-3-oxobutanoate + NADPH + H(+). The protein operates within amino-acid biosynthesis; L-isoleucine biosynthesis; L-isoleucine from 2-oxobutanoate: step 2/4. It participates in amino-acid biosynthesis; L-valine biosynthesis; L-valine from pyruvate: step 2/4. Its function is as follows. Involved in the biosynthesis of branched-chain amino acids (BCAA). Catalyzes an alkyl-migration followed by a ketol-acid reduction of (S)-2-acetolactate (S2AL) to yield (R)-2,3-dihydroxy-isovalerate. In the isomerase reaction, S2AL is rearranged via a Mg-dependent methyl migration to produce 3-hydroxy-3-methyl-2-ketobutyrate (HMKB). In the reductase reaction, this 2-ketoacid undergoes a metal-dependent reduction by NADPH to yield (R)-2,3-dihydroxy-isovalerate. The sequence is that of Ketol-acid reductoisomerase (NADP(+)) from Heliobacterium modesticaldum (strain ATCC 51547 / Ice1).